A 213-amino-acid chain; its full sequence is Methylthioribulose-1-phosphate dehydratase (213 aa).

2 residues coordinate Zn(2+): H104 and H106.

It belongs to the aldolase class II family. MtnB subfamily. Zn(2+) serves as cofactor.

The catalysed reaction is 5-(methylsulfanyl)-D-ribulose 1-phosphate = 5-methylsulfanyl-2,3-dioxopentyl phosphate + H2O. The protein operates within amino-acid biosynthesis; L-methionine biosynthesis via salvage pathway; L-methionine from S-methyl-5-thio-alpha-D-ribose 1-phosphate: step 2/6. Catalyzes the dehydration of methylthioribulose-1-phosphate (MTRu-1-P) into 2,3-diketo-5-methylthiopentyl-1-phosphate (DK-MTP-1-P). This Stenotrophomonas maltophilia (strain K279a) protein is Methylthioribulose-1-phosphate dehydratase.